Consider the following 467-residue polypeptide: Megakaryocyte-associated tyrosine-protein kinase (467 aa).

Residues 1-20 (MPTQRWAPGTQCMTKCENSR) form a disordered region. The region spanning 7 to 69 (APGTQCMTKC…AAAALRQREA (63 aa)) is the SH3 domain. Residues 81–170 (WFHGKISGQE…AICTKLVKPK (90 aa)) enclose the SH2 domain. One can recognise a Protein kinase domain in the interval 194 to 443 (LTLGAQIGEG…IVEKLGRELR (250 aa)). ATP-binding positions include 200-208 (IGEGEFGAV) and Lys221. Catalysis depends on Asp311, which acts as the Proton acceptor. Residues 445–467 (VGVAAPAGGQEAEGSAPTRSQDP) are disordered.

The protein belongs to the protein kinase superfamily. Tyr protein kinase family. CSK subfamily. As to quaternary structure, interacts with KIT. Enriched in lymphoid tissues.

The protein resides in the cytoplasm. The protein localises to the membrane. It carries out the reaction L-tyrosyl-[protein] + ATP = O-phospho-L-tyrosyl-[protein] + ADP + H(+). Could play a significant role in the signal transduction of hematopoietic cells. May regulate tyrosine kinase activity of SRC-family members in brain. The chain is Megakaryocyte-associated tyrosine-protein kinase (Matk) from Rattus norvegicus (Rat).